The sequence spans 272 residues: Dermonecrotic toxin SpeSicTox-betaIB1a (272 aa).

His5 is a catalytic residue. Glu25 and Asp27 together coordinate Mg(2+). His41 serves as the catalytic Nucleophile. 2 disulfide bridges follow: Cys45–Cys51 and Cys47–Cys191. Position 85 (Asp85) interacts with Mg(2+).

The protein belongs to the arthropod phospholipase D family. Class II subfamily. The cofactor is Mg(2+). Expressed by the venom gland.

Its subcellular location is the secreted. It catalyses the reaction an N-(acyl)-sphingosylphosphocholine = an N-(acyl)-sphingosyl-1,3-cyclic phosphate + choline. The enzyme catalyses an N-(acyl)-sphingosylphosphoethanolamine = an N-(acyl)-sphingosyl-1,3-cyclic phosphate + ethanolamine. The catalysed reaction is a 1-acyl-sn-glycero-3-phosphocholine = a 1-acyl-sn-glycero-2,3-cyclic phosphate + choline. It carries out the reaction a 1-acyl-sn-glycero-3-phosphoethanolamine = a 1-acyl-sn-glycero-2,3-cyclic phosphate + ethanolamine. Its function is as follows. Dermonecrotic toxins cleave the phosphodiester linkage between the phosphate and headgroup of certain phospholipids (sphingolipid and lysolipid substrates), forming an alcohol (often choline) and a cyclic phosphate. This toxin acts on sphingomyelin (SM). It may also act on ceramide phosphoethanolamine (CPE), lysophosphatidylcholine (LPC) and lysophosphatidylethanolamine (LPE), but not on lysophosphatidylserine (LPS), and lysophosphatidylglycerol (LPG). It acts by transphosphatidylation, releasing exclusively cyclic phosphate products as second products. Induces dermonecrosis, hemolysis, increased vascular permeability, edema, inflammatory response, and platelet aggregation. In Sicarius peruensis (Six-eyed sand spider), this protein is Dermonecrotic toxin SpeSicTox-betaIB1a.